Consider the following 908-residue polypeptide: NADH-quinone oxidoreductase subunit G (908 aa).

In terms of domain architecture, 2Fe-2S ferredoxin-type spans 2–83 (ATIHVDGKEY…GTFISIDDEE (82 aa)). Positions 34, 45, 48, and 67 each coordinate [2Fe-2S] cluster. Positions 83 to 122 (EAKQFRESVVEWLMTNHPHDCPVCEEGGNCHLQDMTVMTG) constitute a 4Fe-4S His(Cys)3-ligated-type domain. [4Fe-4S] cluster is bound by residues His-99, Cys-103, Cys-106, Cys-112, Cys-151, Cys-154, Cys-157, Cys-201, Cys-228, Cys-231, Cys-235, and Cys-263. One can recognise a 4Fe-4S Mo/W bis-MGD-type domain in the interval 221–277 (MQFAPSICQQCSIGCNISPGERYGELRRIENRYNGTVNHYFLCDRGRFGYGYVNLKD).

Belongs to the complex I 75 kDa subunit family. In terms of assembly, composed of 13 different subunits. Subunits NuoCD, E, F, and G constitute the peripheral sector of the complex. The cofactor is [2Fe-2S] cluster. It depends on [4Fe-4S] cluster as a cofactor.

The enzyme catalyses a quinone + NADH + 5 H(+)(in) = a quinol + NAD(+) + 4 H(+)(out). NDH-1 shuttles electrons from NADH, via FMN and iron-sulfur (Fe-S) centers, to quinones in the respiratory chain. The immediate electron acceptor for the enzyme in this species is believed to be ubiquinone. Couples the redox reaction to proton translocation (for every two electrons transferred, four hydrogen ions are translocated across the cytoplasmic membrane), and thus conserves the redox energy in a proton gradient. The sequence is that of NADH-quinone oxidoreductase subunit G (nuoG) from Salmonella typhi.